The following is a 75-amino-acid chain: DNA-directed RNA polymerase subunit omega (75 aa).

Belongs to the RNA polymerase subunit omega family. In terms of assembly, in cyanobacteria the RNAP catalytic core is composed of 2 alpha, 1 beta, 1 beta', 1 gamma and 1 omega subunit. When a sigma factor is associated with the core the holoenzyme is formed, which can initiate transcription.

It catalyses the reaction RNA(n) + a ribonucleoside 5'-triphosphate = RNA(n+1) + diphosphate. Promotes RNA polymerase assembly. Latches the N- and C-terminal regions of the beta' subunit thereby facilitating its interaction with the beta and alpha subunits. The protein is DNA-directed RNA polymerase subunit omega of Parasynechococcus marenigrum (strain WH8102).